The chain runs to 197 residues: Ribonuclease HII (197 aa).

The 189-residue stretch at Lys-9–Phe-197 folds into the RNase H type-2 domain. A divalent metal cation contacts are provided by Asp-15, Glu-16, and Asp-107.

It belongs to the RNase HII family. The cofactor is Mn(2+). Mg(2+) serves as cofactor.

The protein localises to the cytoplasm. The catalysed reaction is Endonucleolytic cleavage to 5'-phosphomonoester.. Functionally, endonuclease that specifically degrades the RNA of RNA-DNA hybrids. This Haemophilus influenzae (strain ATCC 51907 / DSM 11121 / KW20 / Rd) protein is Ribonuclease HII (rnhB).